A 438-amino-acid polypeptide reads, in one-letter code: Mannan endo-1,4-beta-mannosidase F (438 aa).

The signal sequence occupies residues 1-17 (MHPLPSVALLSAIGAVA). The CBM1 domain occupies 19–54 (QVGPWGQCGGRSYTGETSCVSGWSCVLFNEWYSQCQ). Positions 60–96 (STSSVSATAAPSSTSSSKESVPSATTSKKPVPTGSSS) are ser-rich linker. The segment covering 61–86 (TSSVSATAAPSSTSSSKESVPSATTS) has biased composition (low complexity). The segment at 61 to 92 (TSSVSATAAPSSTSSSKESVPSATTSKKPVPT) is disordered. Residues 97 to 438 (FVKADGLKFN…CGVADHLSTL (342 aa)) are catalytic. W149 and N263 together coordinate substrate. E264 (proton donor) is an active-site residue. N277 carries an N-linked (GlcNAc...) asparagine glycan. Y339 is a substrate binding site. The active-site Nucleophile is the E373. W402 lines the substrate pocket.

Belongs to the glycosyl hydrolase 5 (cellulase A) family.

Its subcellular location is the secreted. The catalysed reaction is Random hydrolysis of (1-&gt;4)-beta-D-mannosidic linkages in mannans, galactomannans and glucomannans.. In terms of biological role, endo-1,4-mannanase, a crucial enzyme for depolymerization of seed galactomannans and wood galactoglucomannans. The polypeptide is Mannan endo-1,4-beta-mannosidase F (manF) (Aspergillus fumigatus (strain ATCC MYA-4609 / CBS 101355 / FGSC A1100 / Af293) (Neosartorya fumigata)).